The following is a 224-amino-acid chain: CASP-like protein 3A1 (224 aa).

The Cytoplasmic portion of the chain corresponds to 1–59; the sequence is MMMNGQKLAPAAEVAVQLPESKVAADNISGTMSGPLVGASGGGTTAAMRPFGRKAEVMH. A helical membrane pass occupies residues 60–80; the sequence is VLLRLLCIITSVAALSFMFTA. The Extracellular segment spans residues 81–106; it reads QQSSTISIYGFMLPVQSKWSFSHSFE. Residues 107 to 127 traverse the membrane as a helical segment; it reads YLVGVSAAVAAHSLLQLLISM. The Cytoplasmic portion of the chain corresponds to 128-142; the sequence is SRLLRKSPVIPSRSH. The chain crosses the membrane as a helical span at residues 143 to 163; sequence AWLIFAGDQVFAYAMISAGAA. Residues 164 to 192 lie on the Extracellular side of the membrane; the sequence is ASGVTNLNRTGIQHTALPNFCKPLQSFCD. N171 carries N-linked (GlcNAc...) asparagine glycosylation. The helical transmembrane segment at 193-213 threads the bilayer; the sequence is HVAVSIFFTFTSCFLLAASAV. At 214–224 the chain is on the cytoplasmic side; that stretch reads QEVIWLSRSKY.

Belongs to the Casparian strip membrane proteins (CASP) family. In terms of assembly, homodimer and heterodimers.

The protein localises to the cell membrane. This Populus trichocarpa (Western balsam poplar) protein is CASP-like protein 3A1.